The chain runs to 449 residues: 3-phosphoshikimate 1-carboxyvinyltransferase (449 aa).

The segment at 1 to 30 (MSHDSSPQPLTAAPGAPLRGRLRPPGDKSI) is disordered. Residues Lys-28, Ser-29, and Arg-33 each contribute to the 3-phosphoshikimate site. Phosphoenolpyruvate is bound at residue Lys-28. 2 residues coordinate phosphoenolpyruvate: Gly-101 and Arg-129. Positions 175, 177, 330, and 357 each coordinate 3-phosphoshikimate. Gln-177 lines the phosphoenolpyruvate pocket. Asp-330 serves as the catalytic Proton acceptor. Positions 361 and 405 each coordinate phosphoenolpyruvate.

It belongs to the EPSP synthase family. Monomer.

Its subcellular location is the cytoplasm. It catalyses the reaction 3-phosphoshikimate + phosphoenolpyruvate = 5-O-(1-carboxyvinyl)-3-phosphoshikimate + phosphate. It functions in the pathway metabolic intermediate biosynthesis; chorismate biosynthesis; chorismate from D-erythrose 4-phosphate and phosphoenolpyruvate: step 6/7. Its function is as follows. Catalyzes the transfer of the enolpyruvyl moiety of phosphoenolpyruvate (PEP) to the 5-hydroxyl of shikimate-3-phosphate (S3P) to produce enolpyruvyl shikimate-3-phosphate and inorganic phosphate. In Methylobacterium radiotolerans (strain ATCC 27329 / DSM 1819 / JCM 2831 / NBRC 15690 / NCIMB 10815 / 0-1), this protein is 3-phosphoshikimate 1-carboxyvinyltransferase.